Consider the following 182-residue polypeptide: Adenylate kinase (182 aa).

12–17 (GAGKGT) is an ATP binding site. The segment at 32–61 (STGDLLRAEVGAKTPLGQEAAAVMNRGELV) is NMP. AMP-binding positions include threonine 33, arginine 38, 59–61 (ELV), 85–88 (GFPR), and glutamine 92. Residues 126-132 (SRGRSDD) are LID. Arginine 127 provides a ligand contact to ATP. AMP contacts are provided by arginine 129 and arginine 140. Glycine 168 contacts ATP.

This sequence belongs to the adenylate kinase family. Monomer.

It is found in the cytoplasm. It catalyses the reaction AMP + ATP = 2 ADP. Its pathway is purine metabolism; AMP biosynthesis via salvage pathway; AMP from ADP: step 1/1. In terms of biological role, catalyzes the reversible transfer of the terminal phosphate group between ATP and AMP. Plays an important role in cellular energy homeostasis and in adenine nucleotide metabolism. The polypeptide is Adenylate kinase (Prochlorococcus marinus (strain MIT 9303)).